Reading from the N-terminus, the 427-residue chain is Trigger factor (427 aa).

The region spanning 163-248 (GDTVILDFEG…LHEIKTKEVP (86 aa)) is the PPIase FKBP-type domain.

Belongs to the FKBP-type PPIase family. Tig subfamily.

The protein resides in the cytoplasm. It carries out the reaction [protein]-peptidylproline (omega=180) = [protein]-peptidylproline (omega=0). Its function is as follows. Involved in protein export. Acts as a chaperone by maintaining the newly synthesized protein in an open conformation. Functions as a peptidyl-prolyl cis-trans isomerase. The protein is Trigger factor of Listeria innocua serovar 6a (strain ATCC BAA-680 / CLIP 11262).